Reading from the N-terminus, the 547-residue chain is ATP synthase subunit alpha (547 aa).

Position 172-179 (172-179 (GDRKTGKT)) interacts with ATP.

Belongs to the ATPase alpha/beta chains family. F-type ATPases have 2 components, CF(1) - the catalytic core - and CF(0) - the membrane proton channel. CF(1) has five subunits: alpha(3), beta(3), gamma(1), delta(1), epsilon(1). CF(0) has three main subunits: a(1), b(2) and c(9-12). The alpha and beta chains form an alternating ring which encloses part of the gamma chain. CF(1) is attached to CF(0) by a central stalk formed by the gamma and epsilon chains, while a peripheral stalk is formed by the delta and b chains.

It is found in the cell membrane. The catalysed reaction is ATP + H2O + 4 H(+)(in) = ADP + phosphate + 5 H(+)(out). Its function is as follows. Produces ATP from ADP in the presence of a proton gradient across the membrane. The alpha chain is a regulatory subunit. This is ATP synthase subunit alpha from Rhodococcus erythropolis (strain PR4 / NBRC 100887).